We begin with the raw amino-acid sequence, 782 residues long: E3 UFM1-protein ligase 1 homolog (782 aa).

Positions 404-477 (NASTQELEDD…GSRGGGGVNK (74 aa)) are disordered. Basic residues predominate over residues 443 to 453 (KSTKKHQRGKA).

This sequence belongs to the UFL1 family.

E3 UFM1-protein ligase that mediates ufmylation of target proteins. In Drosophila erecta (Fruit fly), this protein is E3 UFM1-protein ligase 1 homolog.